Here is a 124-residue protein sequence, read N- to C-terminus: Fluoride-specific ion channel FluC (124 aa).

Transmembrane regions (helical) follow at residues 4–24 (ILAI…LAGG), 32–52 (AFPW…GLIM), 68–88 (GLTI…YETF), and 101–121 (LNVL…IMAA). Residues Gly75 and Thr78 each coordinate Na(+).

Belongs to the fluoride channel Fluc/FEX (TC 1.A.43) family.

It localises to the cell inner membrane. It carries out the reaction fluoride(in) = fluoride(out). With respect to regulation, na(+) is not transported, but it plays an essential structural role and its presence is essential for fluoride channel function. In terms of biological role, fluoride-specific ion channel. Important for reducing fluoride concentration in the cell, thus reducing its toxicity. The polypeptide is Fluoride-specific ion channel FluC (Geobacter sulfurreducens (strain ATCC 51573 / DSM 12127 / PCA)).